The chain runs to 149 residues: Large ribosomal subunit protein bL9 (149 aa).

It belongs to the bacterial ribosomal protein bL9 family.

In terms of biological role, binds to the 23S rRNA. This chain is Large ribosomal subunit protein bL9, found in Klebsiella pneumoniae (strain 342).